The following is a 312-amino-acid chain: uncharacterized protein (312 aa).

This is an uncharacterized protein from Escherichia coli (strain K12).